The following is a 332-amino-acid chain: Putative ankyrin repeat protein R896 (332 aa).

ANK repeat units lie at residues G159–S188, D190–A218, D219–A248, A249–T278, and N280–S308.

In Acanthamoeba polyphaga mimivirus (APMV), this protein is Putative ankyrin repeat protein R896.